Reading from the N-terminus, the 206-residue chain is Small ribosomal subunit protein uS4 (206 aa).

Positions 96 to 156 (GRLDNVVYRM…EKAKKQARIK (61 aa)) constitute an S4 RNA-binding domain.

It belongs to the universal ribosomal protein uS4 family. Part of the 30S ribosomal subunit. Contacts protein S5. The interaction surface between S4 and S5 is involved in control of translational fidelity.

One of the primary rRNA binding proteins, it binds directly to 16S rRNA where it nucleates assembly of the body of the 30S subunit. Functionally, with S5 and S12 plays an important role in translational accuracy. The sequence is that of Small ribosomal subunit protein uS4 from Aeromonas salmonicida (strain A449).